Here is a 181-residue protein sequence, read N- to C-terminus: Transcription termination/antitermination protein NusG (181 aa).

The KOW domain maps to 130–161 (PGEMIRVNDGPFADFNGVVEEVDYEKSRLKVS).

It belongs to the NusG family. As to quaternary structure, monomer. Interacts with the transcription termination factor Rho and with RNA polymerase.

In terms of biological role, participates in transcription elongation, termination and antitermination. In the absence of Rho, increases the rate of transcription elongation by the RNA polymerase (RNAP), probably by partially suppressing pausing. In the presence of Rho, modulates most Rho-dependent termination events by interacting with the RNAP to render the complex more susceptible to the termination activity of Rho. May be required to overcome a kinetic limitation of Rho to function at certain terminators. Also involved in ribosomal RNA transcriptional antitermination. The protein is Transcription termination/antitermination protein NusG of Buchnera aphidicola subsp. Acyrthosiphon pisum (strain APS) (Acyrthosiphon pisum symbiotic bacterium).